Consider the following 255-residue polypeptide: Na(+)-translocating NADH-quinone reductase subunit C (255 aa).

A helical membrane pass occupies residues 11–31 (LGVVVGLSLVCSIIVSTAAVG). FMN phosphoryl threonine is present on threonine 223.

Belongs to the NqrC family. In terms of assembly, composed of six subunits; NqrA, NqrB, NqrC, NqrD, NqrE and NqrF. The cofactor is FMN.

The protein resides in the cell inner membrane. It carries out the reaction a ubiquinone + n Na(+)(in) + NADH + H(+) = a ubiquinol + n Na(+)(out) + NAD(+). In terms of biological role, NQR complex catalyzes the reduction of ubiquinone-1 to ubiquinol by two successive reactions, coupled with the transport of Na(+) ions from the cytoplasm to the periplasm. NqrA to NqrE are probably involved in the second step, the conversion of ubisemiquinone to ubiquinol. The protein is Na(+)-translocating NADH-quinone reductase subunit C of Vibrio vulnificus (strain CMCP6).